We begin with the raw amino-acid sequence, 522 residues long: Maturase K (522 aa).

This sequence belongs to the intron maturase 2 family. MatK subfamily.

The protein resides in the plastid. It is found in the chloroplast. Functionally, usually encoded in the trnK tRNA gene intron. Probably assists in splicing its own and other chloroplast group II introns. The chain is Maturase K from Schizorhiza neglecta (Lapeirousia neglecta).